Reading from the N-terminus, the 159-residue chain is MKIRIGHGFDVHKFGEPRPLILCGVEVPYETGLVAHSDGDVVLHAISDAILGAMALGDIGKHFPDTDAAYKGADSRVLLRHCYALAKAKGFELGNLDVTIIAQAPKMAPHIEDMRQVLAADLNADVADINVKATTTEKLGFTGRKEGIAVEAVVLLSRQ.

A divalent metal cation is bound by residues aspartate 10 and histidine 12. Residues 10-12 (DVH) and 36-37 (HS) contribute to the 4-CDP-2-C-methyl-D-erythritol 2-phosphate site. Histidine 44 serves as a coordination point for a divalent metal cation. 4-CDP-2-C-methyl-D-erythritol 2-phosphate-binding positions include 58-60 (DIG), 63-67 (FPDTD), 102-108 (AQAPKMA), 134-137 (TTTE), phenylalanine 141, 141-144 (FTGR), and arginine 144.

The protein belongs to the IspF family. Homotrimer. Requires a divalent metal cation as cofactor.

The enzyme catalyses 4-CDP-2-C-methyl-D-erythritol 2-phosphate = 2-C-methyl-D-erythritol 2,4-cyclic diphosphate + CMP. The protein operates within isoprenoid biosynthesis; isopentenyl diphosphate biosynthesis via DXP pathway; isopentenyl diphosphate from 1-deoxy-D-xylulose 5-phosphate: step 4/6. Functionally, involved in the biosynthesis of isopentenyl diphosphate (IPP) and dimethylallyl diphosphate (DMAPP), two major building blocks of isoprenoid compounds. Catalyzes the conversion of 4-diphosphocytidyl-2-C-methyl-D-erythritol 2-phosphate (CDP-ME2P) to 2-C-methyl-D-erythritol 2,4-cyclodiphosphate (ME-CPP) with a corresponding release of cytidine 5-monophosphate (CMP). The polypeptide is 2-C-methyl-D-erythritol 2,4-cyclodiphosphate synthase (Shewanella oneidensis (strain ATCC 700550 / JCM 31522 / CIP 106686 / LMG 19005 / NCIMB 14063 / MR-1)).